We begin with the raw amino-acid sequence, 333 residues long: Fructose-1,6-bisphosphatase class 1 (333 aa).

Residues glutamate 90, aspartate 112, leucine 114, and aspartate 115 each contribute to the Mg(2+) site. Residues 115 to 118 (DGSS), asparagine 207, and lysine 273 each bind substrate. Glutamate 279 contacts Mg(2+).

Belongs to the FBPase class 1 family. Homotetramer. Requires Mg(2+) as cofactor.

It is found in the cytoplasm. It catalyses the reaction beta-D-fructose 1,6-bisphosphate + H2O = beta-D-fructose 6-phosphate + phosphate. It participates in carbohydrate biosynthesis; gluconeogenesis. The sequence is that of Fructose-1,6-bisphosphatase class 1 from Aromatoleum aromaticum (strain DSM 19018 / LMG 30748 / EbN1) (Azoarcus sp. (strain EbN1)).